The sequence spans 260 residues: Phosphatidylglycerol--prolipoprotein diacylglyceryl transferase (260 aa).

Helical transmembrane passes span 17 to 37 (VVKW…SWIF), 52 to 72 (LTAA…LHVI), 85 to 105 (IFSG…IGLW), and 113 to 133 (FNLG…QAIG). Arginine 134 lines the a 1,2-diacyl-sn-glycero-3-phospho-(1'-sn-glycerol) pocket. Transmembrane regions (helical) follow at residues 170–190 (APTQ…SLFI), 198–218 (GQLF…IGFV), and 227–247 (GLEQ…PLFI).

This sequence belongs to the Lgt family.

It is found in the cell membrane. It catalyses the reaction L-cysteinyl-[prolipoprotein] + a 1,2-diacyl-sn-glycero-3-phospho-(1'-sn-glycerol) = an S-1,2-diacyl-sn-glyceryl-L-cysteinyl-[prolipoprotein] + sn-glycerol 1-phosphate + H(+). It participates in protein modification; lipoprotein biosynthesis (diacylglyceryl transfer). Functionally, catalyzes the transfer of the diacylglyceryl group from phosphatidylglycerol to the sulfhydryl group of the N-terminal cysteine of a prolipoprotein, the first step in the formation of mature lipoproteins. This Dehalococcoides mccartyi (strain ATCC BAA-2100 / JCM 16839 / KCTC 5957 / BAV1) protein is Phosphatidylglycerol--prolipoprotein diacylglyceryl transferase.